The chain runs to 195 residues: Neurensin-1 (195 aa).

The next 2 helical transmembrane spans lie at 66–86 and 120–140; these read LISG…GFLV and AVLF…SVFV.

Belongs to the VMP family. In terms of tissue distribution, expressed in brain. Not detectable in other tissues tested.

The protein resides in the membrane. Its subcellular location is the cell projection. The protein localises to the neuron projection. May play an important role in neural organelle transport, and in transduction of nerve signals or in nerve growth. May play a role in neurite extension. May play a role in memory consolidation. The polypeptide is Neurensin-1 (Homo sapiens (Human)).